A 270-amino-acid polypeptide reads, in one-letter code: Tetraspanin-17 (270 aa).

Residues 1 to 19 lie on the Cytoplasmic side of the membrane; that stretch reads MPGKHQHFQEPEVGCCGKY. A helical membrane pass occupies residues 20–40; sequence FLFGFNIVFWVLGALFLAIGL. At 41–63 the chain is on the extracellular side; that stretch reads WAWGEKGVLSNISALTDLGGLDP. N-linked (GlcNAc...) asparagine glycosylation occurs at asparagine 51. The helical transmembrane segment at 64–84 threads the bilayer; that stretch reads VWLFVVVGGVMSVLGFAGCIG. At 85–94 the chain is on the cytoplasmic side; it reads ALRENTFLLK. A helical membrane pass occupies residues 95 to 115; the sequence is FFSVFLGLIFFLELATGILAF. Residues 116–234 lie on the Extracellular side of the membrane; the sequence is VFKDWIRDQL…GQFEKWLQDN (119 aa). Intrachain disulfides connect cysteine 155–cysteine 223, cysteine 156–cysteine 188, cysteine 172–cysteine 182, and cysteine 189–cysteine 202. N-linked (GlcNAc...) asparagine glycosylation is present at asparagine 171. Residues 235–255 form a helical membrane-spanning segment; it reads LIVVAGVFMGIALLQIFGICL. Topologically, residues 256-270 are cytoplasmic; sequence AQNLVSDIKAVKANW.

This sequence belongs to the tetraspanin (TM4SF) family. As to quaternary structure, interacts with ADAM10; the interaction influences ADAM10 substrate specificity, endocytosis and turnover.

It is found in the cell membrane. Functionally, part of TspanC8 subgroup, composed of 6 members that interact with the transmembrane metalloprotease ADAM10. This interaction is required for ADAM10 exit from the endoplasmic reticulum and for enzymatic maturation and trafficking to the cell surface as well as substrate specificity. Different TspanC8/ADAM10 complexes have distinct substrates. Seems to regulate VE-cadherin expression in endothelial cells probably through interaction with ADAM10, promoting leukocyte transmigration. The protein is Tetraspanin-17 of Homo sapiens (Human).